Reading from the N-terminus, the 107-residue chain is Heme-degrading monooxygenase (107 aa).

The ABM domain occupies 2–93 (VIVANKTLIR…DYILGNEIEF (92 aa)). Residue Asn-6 coordinates Fe cation. His-76 is a binding site for heme.

It belongs to the antibiotic biosynthesis monooxygenase family. Heme-degrading monooxygenase IsdG subfamily. As to quaternary structure, homodimer.

The protein resides in the cytoplasm. The enzyme catalyses heme b + 3 reduced [NADPH--hemoprotein reductase] + 3 O2 = biliverdin IXalpha + CO + Fe(2+) + 3 oxidized [NADPH--hemoprotein reductase] + 3 H2O + H(+). Functionally, allows bacterial pathogens to use the host heme as an iron source. Catalyzes the oxidative degradation of the heme macrocyclic porphyrin ring to the biliverdin in the presence of a suitable electron donor such as ascorbate or NADPH--cytochrome P450 reductase, with subsequent release of free iron. The chain is Heme-degrading monooxygenase from Shouchella clausii (strain KSM-K16) (Alkalihalobacillus clausii).